The chain runs to 61 residues: MRCLPVLIILLLLTASAPGVVVLPKTEDDVPMSSVYGNGKSILRGILRNGVCCGYKLCHPC.

An N-terminal signal peptide occupies residues 1 to 19; that stretch reads MRCLPVLIILLLLTASAPG. A propeptide spanning residues 20 to 48 is cleaved from the precursor; sequence VVVLPKTEDDVPMSSVYGNGKSILRGILR. 2 cysteine pairs are disulfide-bonded: Cys-52–Cys-61 and Cys-53–Cys-58. The residue at position 60 (Pro-60) is a 4-hydroxyproline.

It belongs to the conotoxin T superfamily. Expressed by the venom duct.

Its subcellular location is the secreted. Chi-conotoxins inhibit the neuronal noradrenaline transporter (NET/SLC6A2). Activity has been described on both human (inhibition of norepinephrine uptake is IC(50)=1.26 uM) and rat (pIC(50)=6.21 corresponding IC(50)=0.16 uM) transporters. Acts as a reversible non-competitive inhibitor. The chain is Chi-conotoxin MrIA from Conus marmoreus (Marble cone).